The chain runs to 303 residues: UDP-3-O-acyl-N-acetylglucosamine deacetylase (303 aa).

3 residues coordinate Zn(2+): H78, H237, and D241. The Proton donor role is filled by H264.

The protein belongs to the LpxC family. Zn(2+) is required as a cofactor.

It catalyses the reaction a UDP-3-O-[(3R)-3-hydroxyacyl]-N-acetyl-alpha-D-glucosamine + H2O = a UDP-3-O-[(3R)-3-hydroxyacyl]-alpha-D-glucosamine + acetate. The protein operates within glycolipid biosynthesis; lipid IV(A) biosynthesis; lipid IV(A) from (3R)-3-hydroxytetradecanoyl-[acyl-carrier-protein] and UDP-N-acetyl-alpha-D-glucosamine: step 2/6. Its function is as follows. Catalyzes the hydrolysis of UDP-3-O-myristoyl-N-acetylglucosamine to form UDP-3-O-myristoylglucosamine and acetate, the committed step in lipid A biosynthesis. This chain is UDP-3-O-acyl-N-acetylglucosamine deacetylase, found in Xanthomonas campestris pv. campestris (strain 8004).